Reading from the N-terminus, the 184-residue chain is Large ribosomal subunit protein eL13 (184 aa).

Residues 28–53 (PARKERRRQARKAKAQRIAPRPASGP) form a disordered region. Basic residues predominate over residues 31–42 (KERRRQARKAKA).

This sequence belongs to the eukaryotic ribosomal protein eL13 family.

The protein is Large ribosomal subunit protein eL13 (RPL13) of Schistosoma mansoni (Blood fluke).